The chain runs to 765 residues: uncharacterized protein (765 aa).

Disordered stretches follow at residues 9–61, 128–164, 265–289, 301–373, 409–526, 540–560, and 668–765; these read NDGN…PSSV, QQQQ…NYTS, TTSS…NITT, WTTT…TYIQ, IGNN…NQSN, PTKK…KYSE, and NSNT…KSRI. Low complexity-rich tracts occupy residues 40–61 and 143–161; these read SNNI…PSSV and SNKS…NNNN. Low complexity-rich tracts occupy residues 301–311, 325–344, 353–373, 414–428, 438–485, 495–504, and 513–526; these read WTTTKPTSSTK, YDSP…STSS, IQPT…TYIQ, SNHT…SLST, NNNN…INNN, DNQSSYSSPD, and SQQQ…NQSN. Positions 668–745 are enriched in low complexity; sequence NSNTDNYNYY…NNSRNNYNNN (78 aa).

This is an uncharacterized protein from Dictyostelium discoideum (Social amoeba).